A 181-amino-acid polypeptide reads, in one-letter code: ATP-dependent protease subunit ClpQ (181 aa).

S2 is an active-site residue. Na(+) is bound by residues G165, C168, and T171.

In terms of assembly, a double ring-shaped homohexamer of ClpQ is capped on each side by a ring-shaped ClpY homohexamer. The assembly of the ClpQ/ClpY complex is dependent on binding of ATP.

It is found in the cytoplasm. Functionally, protease subunit of a proteasome-like degradation complex. In Bacillus subtilis (strain 168), this protein is ATP-dependent protease subunit ClpQ (clpQ).